The chain runs to 147 residues: Myoglobin (147 aa).

Residues 2-137 (ADFEMVLKHW…VMTTIIADIE (136 aa)) form the Globin domain. His-60 contacts nitrite. His-60 provides a ligand contact to O2. His-89 is a heme b binding site.

It belongs to the globin family. In terms of assembly, monomeric.

The protein localises to the cytoplasm. Its subcellular location is the sarcoplasm. The catalysed reaction is Fe(III)-heme b-[protein] + nitric oxide + H2O = Fe(II)-heme b-[protein] + nitrite + 2 H(+). It carries out the reaction H2O2 + AH2 = A + 2 H2O. Functionally, monomeric heme protein which primary function is to store oxygen and facilitate its diffusion within muscle tissues. Reversibly binds oxygen through a pentacoordinated heme iron and enables its timely and efficient release as needed during periods of heightened demand. Depending on the oxidative conditions of tissues and cells, and in addition to its ability to bind oxygen, it also has a nitrite reductase activity whereby it regulates the production of bioactive nitric oxide. Under stress conditions, like hypoxia and anoxia, it also protects cells against reactive oxygen species thanks to its pseudoperoxidase activity. This chain is Myoglobin (mb), found in Makaira nigricans (Atlantic blue marlin).